We begin with the raw amino-acid sequence, 491 residues long: MSETKRVRVRYAPSPTGFLHIGNARTALFNYLFARHNDGDFIIRIEDTDAKRNVADGEESQMKNLKWLGMDWDEGVDVPGKYGPYRQSERQSIYEPLIQQLLDEGLAYKCYCTEEELEAEREKQKANNEMPRYSGKCRHLTKEQQAEKEAQGFKPSIRFKVPANETITFNDMVKDDVSFESNGIGDFVIAKKDGIPTYNFAVAVDDHLMEISHVLRGDDHISNTPKQILIYNAFGWEPPTFGHMTLIVNESRRKLSKRDGSIIQFIEQYRDLGYLPEALFNFIAMLGWSPEGEEEIFSKEEFIKMFDPKRLSKSPALFDNVKLTWVNNQYVKKLPLNDVVELSLPHLQKAGVVSADLDQAELDWVHKLVSLYHEQMSYGAEIVPLSEMFFADAEAITFDEEEKAVLAEDTVPTVISAFKKELEALEVLEAAEVKAAIKRVQKETGVKGKGLFMPIRIVTTGEMHGPELPLAIEVLGREKVLNRMDTWLKNN.

A 'HIGH' region motif is present at residues 13–23 (PSPTGFLHIGN). Zn(2+) contacts are provided by Cys110, Cys112, Cys137, and His139. Positions 254-258 (KLSKR) match the 'KMSKS' region motif. Lys257 lines the ATP pocket.

This sequence belongs to the class-I aminoacyl-tRNA synthetase family. Glutamate--tRNA ligase type 1 subfamily. Monomer. Zn(2+) is required as a cofactor.

The protein resides in the cytoplasm. It carries out the reaction tRNA(Glu) + L-glutamate + ATP = L-glutamyl-tRNA(Glu) + AMP + diphosphate. Functionally, catalyzes the attachment of glutamate to tRNA(Glu) in a two-step reaction: glutamate is first activated by ATP to form Glu-AMP and then transferred to the acceptor end of tRNA(Glu). The protein is Glutamate--tRNA ligase of Listeria welshimeri serovar 6b (strain ATCC 35897 / DSM 20650 / CCUG 15529 / CIP 8149 / NCTC 11857 / SLCC 5334 / V8).